A 380-amino-acid chain; its full sequence is Glucose-1-phosphate adenylyltransferase (380 aa).

Alpha-D-glucose 1-phosphate-binding positions include Gly164, 179–180, and Ser190; that span reads EK.

This sequence belongs to the bacterial/plant glucose-1-phosphate adenylyltransferase family. Homotetramer.

The enzyme catalyses alpha-D-glucose 1-phosphate + ATP + H(+) = ADP-alpha-D-glucose + diphosphate. It functions in the pathway glycan biosynthesis; glycogen biosynthesis. Involved in the biosynthesis of ADP-glucose, a building block required for the elongation reactions to produce glycogen. Catalyzes the reaction between ATP and alpha-D-glucose 1-phosphate (G1P) to produce pyrophosphate and ADP-Glc. This is Glucose-1-phosphate adenylyltransferase from Ligilactobacillus salivarius (strain UCC118) (Lactobacillus salivarius).